A 311-amino-acid chain; its full sequence is Glutaminase (311 aa).

Substrate is bound by residues S66, N116, E162, N169, Y193, Y245, and V263.

It belongs to the glutaminase family. As to quaternary structure, homotetramer.

The enzyme catalyses L-glutamine + H2O = L-glutamate + NH4(+). This Rhodopseudomonas palustris (strain ATCC BAA-98 / CGA009) protein is Glutaminase.